We begin with the raw amino-acid sequence, 380 residues long: uncharacterized protein (380 aa).

The 259-residue stretch at 111-369 (APYSMERHHD…DCLAILAEMI (259 aa)) folds into the Peptidase M14 domain. Residues His164, Glu167, and His257 each coordinate Zn(2+). Glu333 (proton donor/acceptor) is an active-site residue.

Zn(2+) is required as a cofactor.

This is an uncharacterized protein from Zymomonas mobilis subsp. mobilis (strain ATCC 31821 / ZM4 / CP4).